The chain runs to 367 residues: 3-ketodihydrosphingosine reductase ksrA (367 aa).

Residues 12–32 (ASPATLGISLILCGFIVYSVS) form a helical membrane-spanning segment. Gly53, Ser55, Gly57, Arg78, Lys82, Asp108, and Leu109 together coordinate NADPH. Positions 53 to 57 (GGSDG) match the GXSXG motif. The helical transmembrane segment at 193–213 (LIFTCSTLAFVSIAGYAPYSP) threads the bilayer. Tyr211 (proton acceptor) is an active-site residue. Residues Tyr211, Lys215, and Ile259 each coordinate NADP(+). The Lowers pKa of active site Tyr role is filled by Lys215.

It belongs to the short-chain dehydrogenases/reductases (SDR) family.

The protein resides in the endoplasmic reticulum membrane. The enzyme catalyses sphinganine + NADP(+) = 3-oxosphinganine + NADPH + H(+). It participates in lipid metabolism; sphingolipid metabolism. In terms of biological role, catalyzes the reduction of 3'-oxosphinganine (3-ketodihydrosphingosine/KDS) to sphinganine (dihydrosphingosine/DHS), the second step of de novo sphingolipid biosynthesis. This is 3-ketodihydrosphingosine reductase ksrA from Aspergillus fumigatus (strain ATCC MYA-4609 / CBS 101355 / FGSC A1100 / Af293) (Neosartorya fumigata).